A 552-amino-acid chain; its full sequence is Membrane protein insertase YidC (552 aa).

Helical transmembrane passes span 7–24 (VLWV…DNWQ), 364–384 (WGWA…PLSA), 434–454 (LPVV…LASV), 473–493 (PFFI…SLNP), and 508–528 (PIAF…YYVV).

This sequence belongs to the OXA1/ALB3/YidC family. Type 1 subfamily. As to quaternary structure, interacts with the Sec translocase complex via SecD. Specifically interacts with transmembrane segments of nascent integral membrane proteins during membrane integration.

It is found in the cell inner membrane. Required for the insertion and/or proper folding and/or complex formation of integral membrane proteins into the membrane. Involved in integration of membrane proteins that insert both dependently and independently of the Sec translocase complex, as well as at least some lipoproteins. Aids folding of multispanning membrane proteins. This Burkholderia cenocepacia (strain HI2424) protein is Membrane protein insertase YidC.